Reading from the N-terminus, the 485-residue chain is Probable glycine dehydrogenase (decarboxylating) subunit 2 (485 aa).

K273 is modified (N6-(pyridoxal phosphate)lysine).

It belongs to the GcvP family. C-terminal subunit subfamily. As to quaternary structure, the glycine cleavage system is composed of four proteins: P, T, L and H. In this organism, the P 'protein' is a heterodimer of two subunits. Pyridoxal 5'-phosphate is required as a cofactor.

The catalysed reaction is N(6)-[(R)-lipoyl]-L-lysyl-[glycine-cleavage complex H protein] + glycine + H(+) = N(6)-[(R)-S(8)-aminomethyldihydrolipoyl]-L-lysyl-[glycine-cleavage complex H protein] + CO2. Functionally, the glycine cleavage system catalyzes the degradation of glycine. The P protein binds the alpha-amino group of glycine through its pyridoxal phosphate cofactor; CO(2) is released and the remaining methylamine moiety is then transferred to the lipoamide cofactor of the H protein. This Caldanaerobacter subterraneus subsp. tengcongensis (strain DSM 15242 / JCM 11007 / NBRC 100824 / MB4) (Thermoanaerobacter tengcongensis) protein is Probable glycine dehydrogenase (decarboxylating) subunit 2.